We begin with the raw amino-acid sequence, 73 residues long: Signaling peptide TAXIMIN 2 (73 aa).

Positions 1–27 (MGDCRPLGFLIGLPFALVALVLALVGA) are cleaved as a signal peptide.

As to expression, confined to the vasculature of various organs, including seedling roots, leaves, cotyledons, sepals and petals. Also accumulates in root hair cells.

The protein localises to the secreted. Signaling peptide involved in the regulation of lateral organs separation. This chain is Signaling peptide TAXIMIN 2, found in Arabidopsis thaliana (Mouse-ear cress).